The following is a 320-amino-acid chain: Ferrochelatase (320 aa).

Residues histidine 194 and glutamate 275 each contribute to the Fe cation site.

This sequence belongs to the ferrochelatase family.

It is found in the cytoplasm. It catalyses the reaction heme b + 2 H(+) = protoporphyrin IX + Fe(2+). It participates in porphyrin-containing compound metabolism; protoheme biosynthesis; protoheme from protoporphyrin-IX: step 1/1. Functionally, catalyzes the ferrous insertion into protoporphyrin IX. This chain is Ferrochelatase, found in Xylella fastidiosa (strain 9a5c).